The chain runs to 391 residues: Eukaryotic initiation factor 4A-3 (391 aa).

Positions 18-46 (ASFAEMGIKDDLLRGVYQYGFEKPSAIQQ) match the Q motif motif. The Helicase ATP-binding domain occupies 49-219 (VLPIISGRDV…SKFMTDPVRI (171 aa)). Residue 62–69 (AQSGTGKT) coordinates ATP. The short motif at 167–170 (DESD) is the DEAD box element. Residues 230 to 391 (GIKQFFVAVE…EMPMNVADLI (162 aa)) enclose the Helicase C-terminal domain.

It belongs to the DEAD box helicase family. eIF4A subfamily. In terms of assembly, eIF4F is a multi-subunit complex, the composition of which varies with external and internal environmental conditions. It is composed of at least EIF4A, EIF4E and EIF4G.

It carries out the reaction ATP + H2O = ADP + phosphate + H(+). Functionally, ATP-dependent RNA helicase which is a subunit of the eIF4F complex involved in cap recognition and is required for mRNA binding to ribosome. In the current model of translation initiation, eIF4A unwinds RNA secondary structures in the 5'-UTR of mRNAs which is necessary to allow efficient binding of the small ribosomal subunit, and subsequent scanning for the initiator codon. The sequence is that of Eukaryotic initiation factor 4A-3 from Nicotiana plumbaginifolia (Leadwort-leaved tobacco).